A 371-amino-acid chain; its full sequence is Glycosyltransferase 8 domain-containing protein 1 (371 aa).

The Cytoplasmic portion of the chain corresponds to 1-7 (MSFRKVH). Residues 8–28 (IAIILLAAVVFLLILHHNILG) traverse the membrane as a helical; Signal-anchor for type II membrane protein segment. Over 29 to 371 (LTDILTRQSS…RRHGEADGTK (343 aa)) the chain is Lumenal. 3 N-linked (GlcNAc...) asparagine glycosylation sites follow: Asn-104, Asn-249, and Asn-257.

It belongs to the glycosyltransferase 8 family.

The protein localises to the membrane. The chain is Glycosyltransferase 8 domain-containing protein 1 (glt8d1) from Xenopus tropicalis (Western clawed frog).